The sequence spans 127 residues: Prefoldin subunit 6 (127 aa).

N-acetylalanine is present on alanine 2. Lysine 21 carries the N6-acetyllysine modification. The residue at position 66 (lysine 66) is an N6-acetyllysine; alternate. Lysine 66 is covalently cross-linked (Glycyl lysine isopeptide (Lys-Gly) (interchain with G-Cter in SUMO1); alternate). Lysine 66 participates in a covalent cross-link: Glycyl lysine isopeptide (Lys-Gly) (interchain with G-Cter in SUMO2); alternate.

It belongs to the prefoldin subunit beta family. As to quaternary structure, heterohexamer of two PFD-alpha type and four PFD-beta type subunits. Component of the PAQosome complex which is responsible for the biogenesis of several protein complexes and which consists of R2TP complex members RUVBL1, RUVBL2, RPAP3 and PIH1D1, URI complex members PFDN2, PFDN6, PDRG1, UXT and URI1 as well as ASDURF, POLR2E and DNAAF10/WDR92.

Functionally, binds specifically to cytosolic chaperonin (c-CPN) and transfers target proteins to it. Binds to nascent polypeptide chain and promotes folding in an environment in which there are many competing pathways for nonnative proteins. The polypeptide is Prefoldin subunit 6 (Pfdn6) (Mus musculus (Mouse)).